Consider the following 622-residue polypeptide: Iron transport multicopper oxidase fetC (622 aa).

The signal sequence occupies residues 1–20; it reads MARLVHLTAVLAASIRLAAA. Over 21-552 the chain is Extracellular; sequence ATINHDFNVT…DPLPAGFTTR (532 aa). Asn-28 and Asn-74 each carry an N-linked (GlcNAc...) asparagine glycan. Plastocyanin-like domains follow at residues 29-144 and 154-301; these read VTWV…VHDP and EEIV…SYDK. Cu cation contacts are provided by His-80 and His-82. N-linked (GlcNAc...) asparagine glycans are attached at residues Asn-87 and Asn-112. Cu cation is bound by residues His-124 and His-126. 5 N-linked (GlcNAc...) asparagine glycosylation sites follow: Asn-194, Asn-198, Asn-265, Asn-292, and Asn-358. The region spanning 362 to 497 is the Plastocyanin-like 3 domain; that stretch reads KSPKVPTLYS…GLVATFVEAP (136 aa). Cu cation is bound by residues His-412, His-415, and His-417. N-linked (GlcNAc...) asparagine glycosylation occurs at Asn-428. Cu cation contacts are provided by His-478, Cys-479, His-480, and His-484. Residues 553-573 traverse the membrane as a helical segment; sequence GIVALVFSCVTGILGICVVAW. At 574 to 622 the chain is on the cytoplasmic side; the sequence is YGMSQPLEEATAAVATLVREAQVTGSGTSPNHDDGNAAATEAGVLRRRT. Residues 597 to 622 are disordered; sequence TGSGTSPNHDDGNAAATEAGVLRRRT.

It belongs to the multicopper oxidase family.

The protein localises to the cell membrane. Cell surface ferroxidase; part of the reductive iron assimilatory system (RIA), a siderophore-independent high affinity iron uptake mechanism. Required to oxidize Fe(2+) and release it from the transporter. The protein is Iron transport multicopper oxidase fetC of Epichloe festucae (strain E2368).